The following is a 348-amino-acid chain: Calcium homeostasis modulator protein 1 (348 aa).

Residues 1 to 20 (MDKFRMIFQFLQSNQESFMN) lie on the Cytoplasmic side of the membrane. Residues 9–36 (QFLQSNQESFMNGICGIMALASAQMYSA) form a central pore region. A helical membrane pass occupies residues 21-36 (GICGIMALASAQMYSA). At 37–48 (FDFNCPCLPGYN) the chain is on the extracellular side. 2 disulfide bridges follow: Cys41-Cys126 and Cys43-Cys160. The chain crosses the membrane as a helical span at residues 49 to 71 (VVYSLGILLTPPLVLFLLGLVMN). The tract at residues 62–69 (VLFLLGLV) is phospholipid-binding. The Cytoplasmic segment spans residues 72–98 (NNISMLAEEWKRPAGRRAKDPAVLRYM). Residues 99-124 (FCSMAQRALIAPVVWVAVTLLDGKCF) traverse the membrane as a helical segment. Residue Cys100 is the site of S-palmitoyl cysteine attachment. The interval 104–116 (QRALIAPVVWVAV) is phospholipid-binding. Over 125-179 (LCAFCTAVPVATLGNGSLVPGLPAPELARLLARVPCPEIYDGNWLLAREVAVRYL) the chain is Extracellular. The N-linked (GlcNAc...) asparagine glycan is linked to Asn139. A helical transmembrane segment spans residues 180–205 (RCISQALGWSFVLLTTLLAFVVRSVR). The segment at 191 to 201 (VLLTTLLAFVV) is phospholipid-binding. Residues 206–348 (PCFTQVAFLK…KEVATYFSKV (143 aa)) lie on the Cytoplasmic side of the membrane. Cys207 is lipidated: S-palmitoyl cysteine. A disordered region spans residues 324-348 (LMSNGWAGGEPRPPRKEVATYFSKV).

Belongs to the CALHM family. In terms of assembly, oligomerizes to form hexamers and octamers. Does not form gap junctions. Associates with CALHM3 as a pore-forming subunit in a hetero-hexameric channel complex. In terms of processing, N-glycosylated. Assembly with CALHM3 is associated with N-glycan remodeling and formation of hybrid complex- and high mannose-type glycochains. This N-glycan processing regulates channel trafficking and gating kinetics. Palmitoylated by ZDHHC3, ZDHHC20 and possibly ZDHHC7. Palmitoylation regulates voltage-dependent gating of the channel by shifting it toward more depolarized potentials. In terms of tissue distribution, specifically expressed in type II taste bud cells (at protein level). Not expressed in brain.

Its subcellular location is the cell membrane. It localises to the endoplasmic reticulum membrane. The protein localises to the basolateral cell membrane. The enzyme catalyses ATP(in) = ATP(out). The catalysed reaction is Ca(2+)(in) = Ca(2+)(out). It catalyses the reaction Mg(2+)(in) = Mg(2+)(out). It carries out the reaction Na(+)(in) = Na(+)(out). The enzyme catalyses K(+)(in) = K(+)(out). The catalysed reaction is Li(+)(in) = Li(+)(out). It catalyses the reaction Rb(+)(in) = Rb(+)(out). It carries out the reaction Cs(+)(in) = Cs(+)(out). The enzyme catalyses chloride(in) = chloride(out). Regulated by membrane voltage and extracellular Ca(2+). Inhibited by Gd(3+), ruthenium red, and Zn(2+) and partially inhibited by 2-aminoethoxydiphenyl borate. Pore-forming subunit of gustatory voltage-gated ion channels required for sensory perception of sweet, bitter and umami tastes. With CALHM3 forms a fast-activating voltage-gated ATP-release channel in type II taste bud cells, ATP acting as a neurotransmitter to activate afferent neural gustatory pathways. Acts both as a voltage-gated and calcium-activated ion channel: mediates neuronal excitability in response to membrane depolarization and low extracellular Ca(2+) concentration. Has poor ion selectivity and forms a wide pore (around 14 Angstroms) that mediates permeation of small ions including Ca(2+), Na(+), K(+) and Cl(-), as well as larger ions such as ATP(4-). Mediates Ca(2+) influx and downstream activation of the ERK1 and ERK2 cascade in neurons. Triggers endoplasmic reticulum stress by reducing the calcium content of the endoplasmic reticulum. May indirectly control amyloid precursor protein (APP) proteolysis and aggregated amyloid-beta (Abeta) peptides levels in a Ca(2+) dependent manner. The chain is Calcium homeostasis modulator protein 1 from Mus musculus (Mouse).